The chain runs to 500 residues: Cobyric acid synthase (500 aa).

Residues 255–444 enclose the GATase cobBQ-type domain; it reads AIDIAVIRCP…MHDLFHNDAF (190 aa). C337 functions as the Nucleophile in the catalytic mechanism. H436 is a catalytic residue.

It belongs to the CobB/CobQ family. CobQ subfamily.

The protein operates within cofactor biosynthesis; adenosylcobalamin biosynthesis. Functionally, catalyzes amidations at positions B, D, E, and G on adenosylcobyrinic A,C-diamide. NH(2) groups are provided by glutamine, and one molecule of ATP is hydrogenolyzed for each amidation. This is Cobyric acid synthase from Geobacillus thermodenitrificans (strain NG80-2).